The following is a 280-amino-acid chain: Undecaprenyl-diphosphatase (280 aa).

Transmembrane regions (helical) follow at residues 3-23 (IILL…EFLP), 45-65 (VDLF…YDYW), 88-108 (QLGL…FTFA), 115-135 (LFNP…IFYV), 150-170 (VSLK…IPGT), 191-211 (AEFS…LDFI), 225-245 (VLGI…RLLV), and 255-275 (IFAW…WGFG).

It belongs to the UppP family.

Its subcellular location is the cell inner membrane. The enzyme catalyses di-trans,octa-cis-undecaprenyl diphosphate + H2O = di-trans,octa-cis-undecaprenyl phosphate + phosphate + H(+). Its function is as follows. Catalyzes the dephosphorylation of undecaprenyl diphosphate (UPP). Confers resistance to bacitracin. The sequence is that of Undecaprenyl-diphosphatase from Psychrobacter cryohalolentis (strain ATCC BAA-1226 / DSM 17306 / VKM B-2378 / K5).